Here is a 427-residue protein sequence, read N- to C-terminus: Serine--tRNA ligase (427 aa).

231–233 contacts L-serine; sequence TAE. 262-264 provides a ligand contact to ATP; it reads RSE. Glu-285 is an L-serine binding site. 349-352 contributes to the ATP binding site; it reads EISS. Position 385 (Ser-385) interacts with L-serine.

Belongs to the class-II aminoacyl-tRNA synthetase family. Type-1 seryl-tRNA synthetase subfamily. In terms of assembly, homodimer. The tRNA molecule binds across the dimer.

The protein resides in the cytoplasm. It carries out the reaction tRNA(Ser) + L-serine + ATP = L-seryl-tRNA(Ser) + AMP + diphosphate + H(+). The enzyme catalyses tRNA(Sec) + L-serine + ATP = L-seryl-tRNA(Sec) + AMP + diphosphate + H(+). It participates in aminoacyl-tRNA biosynthesis; selenocysteinyl-tRNA(Sec) biosynthesis; L-seryl-tRNA(Sec) from L-serine and tRNA(Sec): step 1/1. Catalyzes the attachment of serine to tRNA(Ser). Is also able to aminoacylate tRNA(Sec) with serine, to form the misacylated tRNA L-seryl-tRNA(Sec), which will be further converted into selenocysteinyl-tRNA(Sec). The polypeptide is Serine--tRNA ligase (Rhizobium etli (strain ATCC 51251 / DSM 11541 / JCM 21823 / NBRC 15573 / CFN 42)).